The primary structure comprises 60 residues: UPF0434 protein PM0859 (60 aa).

Belongs to the UPF0434 family.

The sequence is that of UPF0434 protein PM0859 from Pasteurella multocida (strain Pm70).